A 241-amino-acid polypeptide reads, in one-letter code: Small ribosomal subunit protein uS2 (241 aa).

This sequence belongs to the universal ribosomal protein uS2 family.

This is Small ribosomal subunit protein uS2 from Salmonella choleraesuis (strain SC-B67).